We begin with the raw amino-acid sequence, 141 residues long: Small ribosomal subunit protein eS17z (141 aa).

Belongs to the eukaryotic ribosomal protein eS17 family.

The polypeptide is Small ribosomal subunit protein eS17z (RPS17A) (Arabidopsis thaliana (Mouse-ear cress)).